A 395-amino-acid polypeptide reads, in one-letter code: Phosphoglycerate kinase (395 aa).

Substrate-binding positions include 21-23 (DFN), R36, 59-62 (HLGR), R120, and R153. Residues K203, E325, and 351–354 (GGDS) contribute to the ATP site.

Belongs to the phosphoglycerate kinase family. Monomer.

The protein resides in the cytoplasm. The catalysed reaction is (2R)-3-phosphoglycerate + ATP = (2R)-3-phospho-glyceroyl phosphate + ADP. Its pathway is carbohydrate degradation; glycolysis; pyruvate from D-glyceraldehyde 3-phosphate: step 2/5. This Roseiflexus castenholzii (strain DSM 13941 / HLO8) protein is Phosphoglycerate kinase.